A 352-amino-acid polypeptide reads, in one-letter code: Anthranilate phosphoribosyltransferase (352 aa).

Residues G82, G85–D86, S90, N92–T95, K110–G118, and G122 each bind 5-phospho-alpha-D-ribose 1-diphosphate. G82 serves as a coordination point for anthranilate. Residue S94 coordinates Mg(2+). N113 provides a ligand contact to anthranilate. Anthranilate is bound at residue R168. 2 residues coordinate Mg(2+): D232 and E233.

This sequence belongs to the anthranilate phosphoribosyltransferase family. As to quaternary structure, homodimer. The cofactor is Mg(2+).

The catalysed reaction is N-(5-phospho-beta-D-ribosyl)anthranilate + diphosphate = 5-phospho-alpha-D-ribose 1-diphosphate + anthranilate. It participates in amino-acid biosynthesis; L-tryptophan biosynthesis; L-tryptophan from chorismate: step 2/5. Its function is as follows. Catalyzes the transfer of the phosphoribosyl group of 5-phosphorylribose-1-pyrophosphate (PRPP) to anthranilate to yield N-(5'-phosphoribosyl)-anthranilate (PRA). This is Anthranilate phosphoribosyltransferase from Methanothermobacter thermautotrophicus (strain ATCC 29096 / DSM 1053 / JCM 10044 / NBRC 100330 / Delta H) (Methanobacterium thermoautotrophicum).